The chain runs to 476 residues: Protein transport protein Sec61 subunit alpha isoform 1 (476 aa).

Residues 1-33 (MAIKFLEVIKPFCVILPEIQKPERKIQFKEKVL) lie on the Cytoplasmic side of the membrane. The helical transmembrane segment at 34-53 (WTAITLFIFLVCCQIPLFGI) threads the bilayer. Residues 54-76 (MSSDSADPFYWMRVILASNRGTL) are Lumenal-facing. Residues 77-96 (MELGISPIVTSGLIMQLLAG) form a helical membrane-spanning segment. The Cytoplasmic portion of the chain corresponds to 97–117 (AKIIEVGDTPKDRALFNGAQK). A helical membrane pass occupies residues 118-138 (LFGMIITIGQSIVYVMTGMYG). Topologically, residues 139 to 144 (DPSEMG) are lumenal. The chain crosses the membrane as a helical span at residues 145-165 (AGICLLITIQLFVAGLIVLLL). Over 166-172 (DELLQKG) the chain is Cytoplasmic. Residues 173 to 193 (YGLGSGISLFIATNICETIVW) traverse the membrane as a helical segment. Residues 194–240 (KAFSPTTVNTGRGMEFEGAIIALFHLLATRTDKVRALREAFYRQNLP) are Lumenal-facing. A helical transmembrane segment spans residues 241–261 (NLMNLIATIFVFAVVIYFQGF). Over 262–288 (RVDLPIKSARYRGQYNTYPIKLFYTSN) the chain is Cytoplasmic. The chain crosses the membrane as a helical span at residues 289 to 309 (IPIILQSALVSNLYVISQMLS). Residues 310 to 354 (ARFSGNLLVSLLGTWSDTSSGGPARAYPVGGLCYYLSPPESFGSV) lie on the Lumenal side of the membrane. Residues 355–375 (LEDPVHAVVYIVFMLGSCAFF) form a helical membrane-spanning segment. Residues 376-420 (SKTWIEVSGSSAKDVAKQLKEQQMVMRGHRETSMVHELNRYIPTA) lie on the Cytoplasmic side of the membrane. The helical transmembrane segment at 421 to 441 (AAFGGLCIGALSVLADFLGAI) threads the bilayer. The Lumenal portion of the chain corresponds to 442–445 (GSGT). A helical membrane pass occupies residues 446-462 (GILLAVTIIYQYFEIFV). Residues 463–476 (KEQSEVGSMGALLF) are Cytoplasmic-facing.

This sequence belongs to the SecY/SEC61-alpha family. The SEC61 channel-forming translocon complex consists of channel-forming core components SEC61A1, SEC61B and SEC61G and different auxiliary components such as SEC62 and SEC63. The SEC61 channel associates with the multi-pass translocon (MPT) complex. As to expression, expressed in proximal and distal tubules in kidney (at protein level).

It localises to the endoplasmic reticulum membrane. Component of SEC61 channel-forming translocon complex that mediates transport of signal peptide-containing precursor polypeptides across the endoplasmic reticulum (ER). Forms a ribosome receptor and a gated pore in the ER membrane, both functions required for cotranslational translocation of nascent polypeptides. May cooperate with auxiliary protein SEC62, SEC63 and HSPA5/BiP to enable post-translational transport of small presecretory proteins. The SEC61 channel is also involved in ER membrane insertion of transmembrane proteins: it mediates membrane insertion of the first few transmembrane segments of proteins, while insertion of subsequent transmembrane regions of multi-pass membrane proteins is mediated by the multi-pass translocon (MPT) complex. The SEC61 channel cooperates with the translocating protein TRAM1 to import nascent proteins into the ER. Controls the passive efflux of calcium ions from the ER lumen to the cytosol through SEC61 channel, contributing to the maintenance of cellular calcium homeostasis. Plays a critical role in nephrogenesis, specifically at pronephros stage. The protein is Protein transport protein Sec61 subunit alpha isoform 1 (SEC61A1) of Homo sapiens (Human).